The chain runs to 273 residues: 4-hydroxy-tetrahydrodipicolinate reductase (273 aa).

Residues 12-17 (GAGGRM) and Glu-38 each bind NAD(+). An NADP(+)-binding site is contributed by Arg-39. NAD(+) contacts are provided by residues 102–104 (GTT) and 126–129 (AANF). Catalysis depends on His-159, which acts as the Proton donor/acceptor. Residue His-160 coordinates (S)-2,3,4,5-tetrahydrodipicolinate. Residue Lys-163 is the Proton donor of the active site. 169–170 (GT) provides a ligand contact to (S)-2,3,4,5-tetrahydrodipicolinate.

This sequence belongs to the DapB family. As to quaternary structure, homotetramer.

The protein resides in the cytoplasm. It carries out the reaction (S)-2,3,4,5-tetrahydrodipicolinate + NAD(+) + H2O = (2S,4S)-4-hydroxy-2,3,4,5-tetrahydrodipicolinate + NADH + H(+). It catalyses the reaction (S)-2,3,4,5-tetrahydrodipicolinate + NADP(+) + H2O = (2S,4S)-4-hydroxy-2,3,4,5-tetrahydrodipicolinate + NADPH + H(+). The protein operates within amino-acid biosynthesis; L-lysine biosynthesis via DAP pathway; (S)-tetrahydrodipicolinate from L-aspartate: step 4/4. Catalyzes the conversion of 4-hydroxy-tetrahydrodipicolinate (HTPA) to tetrahydrodipicolinate. This chain is 4-hydroxy-tetrahydrodipicolinate reductase, found in Escherichia coli O127:H6 (strain E2348/69 / EPEC).